A 246-amino-acid polypeptide reads, in one-letter code: 3-oxoacyl-[acyl-carrier-protein] reductase FabG (246 aa).

NADP(+) contacts are provided by residues 11-14, serine 36, 62-63, and asparagine 89; these read GASR and DV. A substrate-binding site is contributed by serine 141. Residue tyrosine 154 is the Proton acceptor of the active site. NADP(+) is bound by residues 154-158 and isoleucine 187; that span reads YVAAK.

The protein belongs to the short-chain dehydrogenases/reductases (SDR) family. As to quaternary structure, homotetramer.

The enzyme catalyses a (3R)-hydroxyacyl-[ACP] + NADP(+) = a 3-oxoacyl-[ACP] + NADPH + H(+). Its pathway is lipid metabolism; fatty acid biosynthesis. Functionally, catalyzes the NADPH-dependent reduction of beta-ketoacyl-ACP substrates to beta-hydroxyacyl-ACP products, the first reductive step in the elongation cycle of fatty acid biosynthesis. The chain is 3-oxoacyl-[acyl-carrier-protein] reductase FabG (fabG) from Bacillus subtilis (strain 168).